We begin with the raw amino-acid sequence, 638 residues long: 2-isopropylmalate synthase (638 aa).

One can recognise a Pyruvate carboxyltransferase domain in the interval 72–346 (PRWCSVDLRD…DPQLDLSNVP (275 aa)). Asp81, His285, His287, and Asn321 together coordinate Mg(2+). Residues 488–638 (VEQSGMTAAG…SAINRSQRQR (151 aa)) are regulatory domain.

Belongs to the alpha-IPM synthase/homocitrate synthase family. LeuA type 2 subfamily. In terms of assembly, homodimer. The cofactor is Mg(2+).

The protein localises to the cytoplasm. The enzyme catalyses 3-methyl-2-oxobutanoate + acetyl-CoA + H2O = (2S)-2-isopropylmalate + CoA + H(+). It participates in amino-acid biosynthesis; L-leucine biosynthesis; L-leucine from 3-methyl-2-oxobutanoate: step 1/4. Its function is as follows. Catalyzes the condensation of the acetyl group of acetyl-CoA with 3-methyl-2-oxobutanoate (2-ketoisovalerate) to form 3-carboxy-3-hydroxy-4-methylpentanoate (2-isopropylmalate). The polypeptide is 2-isopropylmalate synthase (Bifidobacterium longum subsp. infantis (strain ATCC 15697 / DSM 20088 / JCM 1222 / NCTC 11817 / S12)).